Here is a 190-residue protein sequence, read N- to C-terminus: Peptidyl-tRNA hydrolase (190 aa).

Tyrosine 14 lines the tRNA pocket. The Proton acceptor role is filled by histidine 19. 3 residues coordinate tRNA: tyrosine 64, asparagine 66, and asparagine 112.

It belongs to the PTH family. Monomer.

The protein resides in the cytoplasm. It catalyses the reaction an N-acyl-L-alpha-aminoacyl-tRNA + H2O = an N-acyl-L-amino acid + a tRNA + H(+). Functionally, hydrolyzes ribosome-free peptidyl-tRNAs (with 1 or more amino acids incorporated), which drop off the ribosome during protein synthesis, or as a result of ribosome stalling. Its function is as follows. Catalyzes the release of premature peptidyl moieties from peptidyl-tRNA molecules trapped in stalled 50S ribosomal subunits, and thus maintains levels of free tRNAs and 50S ribosomes. The sequence is that of Peptidyl-tRNA hydrolase from Chlorobium chlorochromatii (strain CaD3).